The chain runs to 93 residues: Acylphosphatase (93 aa).

Cys-5 and Cys-49 form a disulfide bridge. Residues Cys-5 to Tyr-93 enclose the Acylphosphatase-like domain. Active-site residues include Arg-20 and Asn-38.

The protein belongs to the acylphosphatase family.

The catalysed reaction is an acyl phosphate + H2O = a carboxylate + phosphate + H(+). The sequence is that of Acylphosphatase from Salmonella arizonae (strain ATCC BAA-731 / CDC346-86 / RSK2980).